A 288-amino-acid chain; its full sequence is 4-diphosphocytidyl-2-C-methyl-D-erythritol kinase (288 aa).

Residue Lys-8 is part of the active site. Position 90-100 (90-100 (PLEAGLAGGSA)) interacts with ATP. Residue Asp-132 is part of the active site.

It belongs to the GHMP kinase family. IspE subfamily.

The enzyme catalyses 4-CDP-2-C-methyl-D-erythritol + ATP = 4-CDP-2-C-methyl-D-erythritol 2-phosphate + ADP + H(+). It participates in isoprenoid biosynthesis; isopentenyl diphosphate biosynthesis via DXP pathway; isopentenyl diphosphate from 1-deoxy-D-xylulose 5-phosphate: step 3/6. Functionally, catalyzes the phosphorylation of the position 2 hydroxy group of 4-diphosphocytidyl-2C-methyl-D-erythritol. The polypeptide is 4-diphosphocytidyl-2-C-methyl-D-erythritol kinase (Carboxydothermus hydrogenoformans (strain ATCC BAA-161 / DSM 6008 / Z-2901)).